Here is a 700-residue protein sequence, read N- to C-terminus: Inhibitor of carbonic anhydrase (700 aa).

A signal peptide spans Met-1–Ala-19. Transferrin-like domains lie at Ile-25–Arg-347 and Val-355–Gln-685. 16 disulfides stabilise this stretch: Cys-28-Cys-67, Cys-38-Cys-58, Cys-137-Cys-213, Cys-172-Cys-188, Cys-175-Cys-198, Cys-185-Cys-196, Cys-246-Cys-260, Cys-358-Cys-390, Cys-368-Cys-381, Cys-415-Cys-695, Cys-438-Cys-658, Cys-470-Cys-545, Cys-494-Cys-686, Cys-504-Cys-518, Cys-515-Cys-528, and Cys-585-Cys-599. N-linked (GlcNAc...) asparagine glycosylation occurs at Asn-664.

The protein belongs to the transferrin family. As to quaternary structure, monomer. Interacts (via transferrin-like domain 2) with CA2. N-glycosylated. In terms of tissue distribution, detected in blood plasma, heart, kidney, liver, colon, lung, spleen, pancreas and testis (at protein level).

The protein localises to the secreted. Its function is as follows. Inhibitor for carbonic anhydrase 2 (CA2). Does not bind iron ions. The polypeptide is Inhibitor of carbonic anhydrase (Mus musculus (Mouse)).